Here is a 457-residue protein sequence, read N- to C-terminus: Ribosomal protein uS12 methylthiotransferase RimO (457 aa).

Residues 6–116 enclose the MTTase N-terminal domain; it reads PKVGFVSLGC…VMEAVHAALP (111 aa). Cysteine 15, cysteine 51, cysteine 80, cysteine 147, cysteine 151, and cysteine 154 together coordinate [4Fe-4S] cluster. The Radical SAM core domain occupies 133–371; it reads LTPRHYAYLK…AKQAQISALR (239 aa). One can recognise a TRAM domain in the interval 373–441; sequence ESKIGSVQQC…EHDLFGDALP (69 aa).

This sequence belongs to the methylthiotransferase family. RimO subfamily. [4Fe-4S] cluster serves as cofactor.

It localises to the cytoplasm. It catalyses the reaction L-aspartate(89)-[ribosomal protein uS12]-hydrogen + (sulfur carrier)-SH + AH2 + 2 S-adenosyl-L-methionine = 3-methylsulfanyl-L-aspartate(89)-[ribosomal protein uS12]-hydrogen + (sulfur carrier)-H + 5'-deoxyadenosine + L-methionine + A + S-adenosyl-L-homocysteine + 2 H(+). Functionally, catalyzes the methylthiolation of an aspartic acid residue of ribosomal protein uS12. The protein is Ribosomal protein uS12 methylthiotransferase RimO of Xanthomonas axonopodis pv. citri (strain 306).